The following is a 213-amino-acid chain: Orotidine 5'-phosphate decarboxylase (213 aa).

Substrate is bound by residues Asp11, Lys33, 61-70 (DLKLADIPNT), Ser113, 166-176 (PGVGAQGGKAS), Gly189, and Arg190. Lys63 functions as the Proton donor in the catalytic mechanism.

This sequence belongs to the OMP decarboxylase family. Type 1 subfamily. As to quaternary structure, homodimer.

The enzyme catalyses orotidine 5'-phosphate + H(+) = UMP + CO2. Its pathway is pyrimidine metabolism; UMP biosynthesis via de novo pathway; UMP from orotate: step 2/2. Functionally, catalyzes the decarboxylation of orotidine 5'-monophosphate (OMP) to uridine 5'-monophosphate (UMP). The protein is Orotidine 5'-phosphate decarboxylase of Thermococcus kodakarensis (strain ATCC BAA-918 / JCM 12380 / KOD1) (Pyrococcus kodakaraensis (strain KOD1)).